We begin with the raw amino-acid sequence, 488 residues long: Catalase (488 aa).

Positions 1–24 (MTDRRNLTTNQGVPIGDNQNSMTA) are disordered. Over residues 7-23 (LTTNQGVPIGDNQNSMT) the composition is skewed to polar residues. Residues His-55 and Asn-128 contribute to the active site. Tyr-338 lines the heme pocket.

It belongs to the catalase family. Heme serves as cofactor.

It is found in the cytoplasm. The catalysed reaction is 2 H2O2 = O2 + 2 H2O. Functionally, decomposes hydrogen peroxide into water and oxygen; serves to protect cells from the toxic effects of hydrogen peroxide. The sequence is that of Catalase (kat) from Listeria seeligeri.